A 106-amino-acid chain; its full sequence is MQFAIYAAAALFEIAGCFAFWAWLKLDKSPLWLAPGMVCLALFAYLLTLIESNVAGRAYAAYGGIYIIASILWIWFAEGARPDRWDVVGACTAFAGTCIILFAPRS.

The next 4 helical transmembrane spans lie at 3-23 (FAIYAAAALFEIAGCFAFWAW), 30-50 (PLWLAPGMVCLALFAYLLTLI), 60-80 (AAYGGIYIIASILWIWFAEGA), and 84-104 (RWDVVGACTAFAGTCIILFAP).

It belongs to the UPF0060 family.

The protein resides in the cell inner membrane. The sequence is that of UPF0060 membrane protein Oant_2511 from Brucella anthropi (strain ATCC 49188 / DSM 6882 / CCUG 24695 / JCM 21032 / LMG 3331 / NBRC 15819 / NCTC 12168 / Alc 37) (Ochrobactrum anthropi).